The sequence spans 484 residues: MFPNSILGRPPFTPTHQQHNNFFALSPTLYSHQQLIDAQFNFQNVDLSRAVSLQPLTYGTVSPIQTSTSPLFRGRKRISDEKAFRLDGKRQRFHSPHQEPTIINQLVPLSGDRRYSMPPLFHTHYVPEIVRCVPPLREIPLLEPREITLPEAKDKLSQQILELFETCQQQASDLKKKELCRAQLQREIQLLFPQSRLFLVGSSLNGFGARSSDGDLCLVVKEEPCFFQVNQKTEARHILTLVHKHFCTRLSGYIERPQLIRAKVPIVKFRDKVSCVEFDLNVNNTVGIRNTFLLRTYAYLENRVRPLVLVIKKWASHHEINDASRGTLSSYSLVLMVLHYLQTLPEPILPSLQKIYPESFSTSVQLHLVHHAPCNVPPYLSKNESSLGDLLLGFLKYYATEFDWNTQMISVREAKAIPRPDDMEWRNKYICVEEPFDGTNTARAVHEKQKFDMIKDQFLKSWQRLKNKRDLNSVLPLRAATLKR.

A phosphoserine mark is found at Ser-62 and Ser-69. The Nuclear localization signal signature appears at 76 to 92; that stretch reads KRISDEKAFRLDGKRQR. Ser-95 is modified (phosphoserine). Residues Asp-213 and Asp-215 each contribute to the Mg(2+) site. Residues 386 to 440 form the PAP-associated domain; sequence SLGDLLLGFLKYYATEFDWNTQMISVREAKAIPRPDDMEWRNKYICVEEPFDGTN.

This sequence belongs to the DNA polymerase type-B-like family. GLD2 subfamily. As to quaternary structure, interacts with CPEB1, CPEB2, CPSF1 and PABPC1. Interacts with QKI isoform QKI7; promoting recruitment to miRNA miR-122 and miR-122 stabilization. Requires Mg(2+) as cofactor. Mn(2+) is required as a cofactor.

It is found in the cytoplasm. It localises to the nucleus. The enzyme catalyses RNA(n) + ATP = RNA(n)-3'-adenine ribonucleotide + diphosphate. Its function is as follows. Cytoplasmic poly(A) RNA polymerase that adds successive AMP monomers to the 3'-end of specific RNAs, forming a poly(A) tail. In contrast to the canonical nuclear poly(A) RNA polymerase, it only adds poly(A) to selected cytoplasmic mRNAs. Does not play a role in replication-dependent histone mRNA degradation. Adds a single nucleotide to the 3' end of specific miRNAs, monoadenylation stabilizes and prolongs the activity of some but not all miRNAs. The chain is Poly(A) RNA polymerase GLD2 from Rattus norvegicus (Rat).